We begin with the raw amino-acid sequence, 100 residues long: Urease subunit gamma (100 aa).

The protein belongs to the urease gamma subunit family. As to quaternary structure, heterotrimer of UreA (gamma), UreB (beta) and UreC (alpha) subunits. Three heterotrimers associate to form the active enzyme.

The protein resides in the cytoplasm. The catalysed reaction is urea + 2 H2O + H(+) = hydrogencarbonate + 2 NH4(+). It participates in nitrogen metabolism; urea degradation; CO(2) and NH(3) from urea (urease route): step 1/1. The polypeptide is Urease subunit gamma (Alkalilimnicola ehrlichii (strain ATCC BAA-1101 / DSM 17681 / MLHE-1)).